The primary structure comprises 361 residues: Single-stranded DNA-binding protein 3 (361 aa).

At Met-1 the chain carries N-acetylmethionine. In terms of domain architecture, LisH spans 16–48 (AREKLALYVYEYLLHVGAQKSAQTFLSEIRWEK). An asymmetric dimethylarginine mark is found at Arg-128, Arg-134, and Arg-138. Disordered stretches follow at residues 140–166 (GNQP…QQGH) and 184–361 (PMGP…TMSV). Residues 223 to 241 (PNSANSIPYSSSSPGTYVG) are compositionally biased toward low complexity. Over residues 245–255 (GGGPPGTPIMP) the composition is skewed to pro residues. A compositionally biased stretch (polar residues) spans 258 to 269 (ADSTNSSDNIYT). Gly residues predominate over residues 288–298 (GSDGPMGGMGG). Low complexity predominate over residues 319 to 330 (NSPNNISGISNP). Phosphoserine occurs at positions 320, 325, and 328. Thr-333 bears the Phosphothreonine mark. Residues 346–361 (HSFQNDNYSPSMTMSV) show a composition bias toward polar residues. Ser-354 and Ser-360 each carry phosphoserine.

It is found in the nucleus. In terms of biological role, may be involved in transcription regulation of the alpha 2(I) collagen gene where it binds to the single-stranded polypyrimidine sequences in the promoter region. The polypeptide is Single-stranded DNA-binding protein 3 (Ssbp3) (Rattus norvegicus (Rat)).